The following is a 693-amino-acid chain: Glycine--tRNA ligase beta subunit (693 aa).

The protein belongs to the class-II aminoacyl-tRNA synthetase family. In terms of assembly, tetramer of two alpha and two beta subunits.

The protein localises to the cytoplasm. It catalyses the reaction tRNA(Gly) + glycine + ATP = glycyl-tRNA(Gly) + AMP + diphosphate. The sequence is that of Glycine--tRNA ligase beta subunit from Vibrio vulnificus (strain CMCP6).